We begin with the raw amino-acid sequence, 1564 residues long: Superkiller complex protein 3 (1564 aa).

S2 carries the N-acetylserine modification. TPR repeat units follow at residues 6–39 (VKTA…EKNN), 40–73 (YNAW…EPDQ), 272–305 (GPGL…SPVC), 307–339 (SGWY…VDNL), 386–419 (PGLL…YPDL), 420–453 (AEVH…DTEV), 455–492 (EYHY…DTYM), 493–527 (GKVF…DDTD), 564–597 (KWAW…DPKD), 598–631 (FNCW…NPES), 633–665 (YSVF…KEDY), 679–713 (MAKA…RADV), 790–824 (AQHL…DSNN), 826–860 (LYWN…EQIN), 861–894 (AVAW…DPSY), 980–1013 (APAF…LQTA), 1020–1054 (NVAI…LEDI), 1056–1084 (GFAL…VESE), 1326–1359 (KWSL…NPDQ), and 1400–1433 (VPAW…ASQR).

It belongs to the SKI3 family. In terms of assembly, component of the SKI complex which consists of SKIC2, SKIC3 and SKIC8. Interacts with PAF1. As to expression, widely expressed with the highest levels observed in vascular tissues, lymph node, pituitary, lung and intestine. Not expressed in the liver.

The protein localises to the cytoplasm. It localises to the nucleus. In terms of biological role, component of the SKI complex, a multiprotein complex that assists the RNA-degrading exosome during the mRNA decay and quality-control pathways. The SKI complex catalyzes mRNA extraction from 80S ribosomal complexes in the 3'-5' direction and channels mRNA to the cytosolic exosome for degradation. SKI-mediated extraction of mRNA from stalled ribosomes allow binding of the Pelota-HBS1L complex and subsequent ribosome disassembly by ABCE1 for ribosome recycling. In the nucleus, the SKI complex associates with transcriptionally active genes in a manner dependent on PAF1 complex (PAF1C). This chain is Superkiller complex protein 3, found in Homo sapiens (Human).